The sequence spans 370 residues: Probable neutral protease 2 homolog TRV_02539 (370 aa).

A signal peptide spans 1 to 19 (MQLVAALAALGALVAPAVA). A propeptide spanning residues 20-188 (YPHAPMNETL…SIHSRALQKR (169 aa)) is cleaved from the precursor. Cystine bridges form between cysteine 196–cysteine 267 and cysteine 274–cysteine 292. Histidine 316 is a binding site for Zn(2+). Residue glutamate 317 is part of the active site. Positions 320 and 331 each coordinate Zn(2+).

Belongs to the peptidase M35 family. Requires Zn(2+) as cofactor.

Its subcellular location is the secreted. It carries out the reaction Preferential cleavage of bonds with hydrophobic residues in P1'. Also 3-Asn-|-Gln-4 and 8-Gly-|-Ser-9 bonds in insulin B chain.. Functionally, probable secreted metalloprotease that shows high activities on basic nuclear substrates such as histone and protamine. May be involved in virulence. This chain is Probable neutral protease 2 homolog TRV_02539, found in Trichophyton verrucosum (strain HKI 0517).